A 440-amino-acid polypeptide reads, in one-letter code: Beta-1,3-galactosyl-O-glycosyl-glycoprotein beta-1,6-N-acetylglucosaminyltransferase (440 aa).

The Cytoplasmic portion of the chain corresponds to 1-9 (MKMAGWKKK). A helical; Signal-anchor for type II membrane protein transmembrane segment spans residues 10–30 (LCPGHHLWALGCYMLLAVVSL). Residues 31 to 440 (RLSLRFKCDV…RHKAIYGTEL (410 aa)) lie on the Lumenal side of the membrane. N-linked (GlcNAc...) asparagine; by host glycans are attached at residues Asn-72 and Asn-108. 4 disulfide bridges follow: Cys-73/Cys-230, Cys-164/Cys-384, Cys-185/Cys-212, and Cys-393/Cys-425.

The protein belongs to the glycosyltransferase 14 family.

The protein resides in the host Golgi apparatus membrane. The enzyme catalyses a 3-O-[beta-D-galactosyl-(1-&gt;3)-N-acetyl-alpha-D-galactosaminyl]-L-seryl-[protein] + UDP-N-acetyl-alpha-D-glucosamine = 3-O-{beta-D-galactosyl-(1-&gt;3)-[N-acetyl-beta-D-glucosaminyl-(1-&gt;6)]-N-acetyl-alpha-D-galactosaminyl}-L-seryl-[protein] + UDP + H(+). It carries out the reaction a 3-O-[beta-D-galactosyl-(1-&gt;3)-N-acetyl-alpha-D-galactosaminyl]-L-threonyl-[protein] + UDP-N-acetyl-alpha-D-glucosamine = a 3-O-{beta-D-galactosyl-(1-&gt;3)-[N-acetyl-beta-D-glucosaminyl-(1-&gt;6)]-N-acetyl-alpha-D-galactosaminyl}-L-threonyl-[protein] + UDP + H(+). The catalysed reaction is a beta-D-Gal-(1-&gt;4)-beta-D-GlcNAc-(1-&gt;3)-beta-D-Gal-(1-&gt;4)-beta-D-GlcNAc derivative + UDP-N-acetyl-alpha-D-glucosamine = a beta-D-Gal-(1-&gt;4)-beta-D-GlcNAc-(1-&gt;3)-[beta-D-GlcNAc-(1-&gt;6)]-beta-D-Gal-(1-&gt;4)-N-acetyl-beta-D-glucosaminyl derivative + UDP + H(+). It catalyses the reaction 3-O-[N-acetyl-beta-D-glucosaminyl-(1-&gt;3)-N-acetyl-alpha-D-galactosaminyl]-L-seryl-[protein] + UDP-N-acetyl-alpha-D-glucosamine = 3-O-[N-acetyl-beta-D-glucosaminyl-(1-&gt;3)-[N-acetyl-beta-D-glucosaminyl-(1-&gt;6)]-N-acetyl-alpha-D-galactosaminyl]-L-seryl-[protein] + UDP + H(+). The enzyme catalyses a 3-O-[N-acetyl-beta-D-glucosaminyl-(1-&gt;3)-N-acetyl-alpha-D-galactosaminyl]-L-threonyl-[protein] + UDP-N-acetyl-alpha-D-glucosamine = 3-O-[N-acetyl-beta-D-glucosaminyl-(1-&gt;3)-[N-acetyl-beta-D-glucosaminyl-(1-&gt;6)]-N-acetyl-alpha-D-galactosaminyl]-L-threonyl-[protein] + UDP + H(+). It functions in the pathway protein modification; protein glycosylation. In terms of biological role, non-essential glycosyltransferase that can synthesize all known mucin beta 6 N-acetylglucosaminides. Mediates core 2 and core 4 O-glycan branching, 2 important steps in mucin-type biosynthesis. Has also I-branching enzyme activity by converting linear into branched poly-N-acetyllactosaminoglycans. Contributes to the post-translational modifications of structural proteins. This chain is Beta-1,3-galactosyl-O-glycosyl-glycoprotein beta-1,6-N-acetylglucosaminyltransferase (Bo17), found in Bovine herpesvirus 4 (strain V. test) (BoHV-4).